A 282-amino-acid chain; its full sequence is Reaction center protein L chain (282 aa).

The Cytoplasmic portion of the chain corresponds to 2 to 32 (ALLSFERKYRVPGGTLVGGNLFDFWVGPFYV). Residues 33–56 (GFFGVATFFFAALGIILIAWSAVL) traverse the membrane as a helical segment. Topologically, residues 57–83 (QGTWNPQLISVYPPALEYGLGGAPLAK) are periplasmic. The chain crosses the membrane as a helical span at residues 84–112 (GGLWQIITICATGAFVSWALREVEICRKL). Residues 113–116 (GIGY) are Cytoplasmic-facing. Residues 117–139 (HIPFAFAFAILAYLTLVLFRPVM) form a helical membrane-spanning segment. The Periplasmic segment spans residues 140-171 (MGAWGYAFPYGIWTHLDWVSNTGYTYGNFHYN). His154 and His174 together coordinate (7R,8Z)-bacteriochlorophyll b. Residues 172–199 (PAHMIAISFFFTNALALALHGALVLSAA) form a helical membrane-spanning segment. A Fe cation-binding site is contributed by His191. Topologically, residues 200–225 (NPEKGKEMRTPDHEDTFFRDLVGYSI) are cytoplasmic. Phe217 provides a ligand contact to a ubiquinone. Residues 226–251 (GTLGIHRLGLLLSLSAVFFSALCMII) form a helical membrane-spanning segment. Position 231 (His231) interacts with Fe cation. Residues 252 to 282 (TGTIWFDQWVDWWQWWVKLPWWANIPGGING) are Periplasmic-facing.

The protein belongs to the reaction center PufL/M/PsbA/D family. Reaction center is composed of four bacteriochlorophylls, two bacteriopheophytins, two ubiquinones, one iron, and three highly hydrophobic polypeptide chains (designated L, M, and H).

It is found in the cellular chromatophore membrane. Its function is as follows. The reaction center is a membrane-bound complex that mediates the initial photochemical event in the electron transfer process of photosynthesis. This chain is Reaction center protein L chain (pufL), found in Cereibacter sphaeroides (strain ATCC 17023 / DSM 158 / JCM 6121 / CCUG 31486 / LMG 2827 / NBRC 12203 / NCIMB 8253 / ATH 2.4.1.) (Rhodobacter sphaeroides).